A 214-amino-acid chain; its full sequence is Large ribosomal subunit protein uL3 (214 aa).

The segment at 133-154 is disordered; that stretch reads GLGAGHGTQRKHRSPGSIGGCA.

The protein belongs to the universal ribosomal protein uL3 family. In terms of assembly, part of the 50S ribosomal subunit. Forms a cluster with proteins L14 and L19.

Its function is as follows. One of the primary rRNA binding proteins, it binds directly near the 3'-end of the 23S rRNA, where it nucleates assembly of the 50S subunit. The polypeptide is Large ribosomal subunit protein uL3 (Streptomyces avermitilis (strain ATCC 31267 / DSM 46492 / JCM 5070 / NBRC 14893 / NCIMB 12804 / NRRL 8165 / MA-4680)).